Reading from the N-terminus, the 174-residue chain is UPF0398 protein LACR_0544 (174 aa).

Belongs to the UPF0398 family.

The sequence is that of UPF0398 protein LACR_0544 from Lactococcus lactis subsp. cremoris (strain SK11).